The following is a 79-amino-acid chain: Small ribosomal subunit protein bS18 (79 aa).

This sequence belongs to the bacterial ribosomal protein bS18 family. As to quaternary structure, part of the 30S ribosomal subunit. Forms a tight heterodimer with protein bS6.

In terms of biological role, binds as a heterodimer with protein bS6 to the central domain of the 16S rRNA, where it helps stabilize the platform of the 30S subunit. This is Small ribosomal subunit protein bS18 from Nitrobacter hamburgensis (strain DSM 10229 / NCIMB 13809 / X14).